Consider the following 316-residue polypeptide: MNSRILATGSYLPTRVRTNADLEKMVETSDEWIVTRSGIRERRLAAEHETVATMGFEAAKKALETAKIDPNEIELIIVGTTSNSHAYPSAACQIQGMLNINDAISFDLAAACTGFVYALSVADQFIRAGTVKKALVIGSDLNSRNLDETDRSTVILFGDGAGAIVLEASEEEGIISTHLHAVADKNDVLVLPHAQRNDEKSGYIMMQGNETFKLAVRELSNVVEETLVANNLDKKDIDWLVPHQANLRIIAATVKKLDMTLEQAVVTLDKYANTSAASVPISLDEAVRDGRIRRGQLLLLEAFGGGWTWGSALVRF.

Active-site residues include cysteine 112 and histidine 243. An ACP-binding region spans residues 244 to 248 (QANLR). Residue asparagine 273 is part of the active site.

The protein belongs to the thiolase-like superfamily. FabH family. As to quaternary structure, homodimer.

The protein resides in the cytoplasm. The catalysed reaction is malonyl-[ACP] + acetyl-CoA + H(+) = 3-oxobutanoyl-[ACP] + CO2 + CoA. It participates in lipid metabolism; fatty acid biosynthesis. Its function is as follows. Catalyzes the condensation reaction of fatty acid synthesis by the addition to an acyl acceptor of two carbons from malonyl-ACP. Catalyzes the first condensation reaction which initiates fatty acid synthesis and may therefore play a role in governing the total rate of fatty acid production. Possesses both acetoacetyl-ACP synthase and acetyl transacylase activities. Its substrate specificity determines the biosynthesis of branched-chain and/or straight-chain of fatty acids. The chain is Beta-ketoacyl-[acyl-carrier-protein] synthase III from Actinobacillus succinogenes (strain ATCC 55618 / DSM 22257 / CCUG 43843 / 130Z).